The primary structure comprises 122 residues: UPF0102 protein BQ09720 (122 aa).

This sequence belongs to the UPF0102 family.

This is UPF0102 protein BQ09720 from Bartonella quintana (strain Toulouse) (Rochalimaea quintana).